The chain runs to 579 residues: Adipocyte plasma membrane-associated protein Hemomucin (579 aa).

Over 1 to 6 the chain is Cytoplasmic; it reads MGLLYA. A helical transmembrane segment spans residues 7–29; sequence LRVRIMNFMIFFLLIILMPGLPP. Residues 30-579 are Extracellular-facing; sequence RTTFPFKDYI…INKQGVNVEL (550 aa). 2 N-linked (GlcNAc...) asparagine glycosylation sites follow: Asn-213 and Asn-217. Residues 427 to 579 form a disordered region; sequence GLEASIGVPP…INKQGVNVEL (153 aa). Over residues 435 to 529 the composition is skewed to low complexity; sequence PPSKATPKPK…PKPTTTTTPT (95 aa).

Belongs to the strictosidine synthase family. Interacts with sturkopf. O-glycosylated. Glycosylated in the ovary of 4 day old females. Post-translationally, phosphorylated. In terms of tissue distribution, detected in ovaries (at protein level). In larvae, detected in the fat body, salivary glands, imaginal disks and gut (at protein level). In adults, expressed in the cardia, and in regions of the ventriculus including the area posterior to the cardia. In females also expressed in follicle cells.

It localises to the cell membrane. Transmembrane mucin that may be involved in cellular adhesion and the innate immune response. Membrane-tethered mucins are involved in many cell surface functions and form a physical barrier around cells to regulate cell-cell and/or cell-substrate interactions, and protect against pathogens or harmful extracellular conditions. This mucin likely acts in hemocyte adhesion as it is released from hemocytes during coagulation and is also able to bind lipophorin particles which form part of the hemocyte coagulogen. Able to induce expression of the antibacterial proteins in the presence of GalNAc-specific lectins and so probably also functions in the innate immune response. This is Adipocyte plasma membrane-associated protein Hemomucin from Drosophila melanogaster (Fruit fly).